We begin with the raw amino-acid sequence, 671 residues long: UBA domain-containing protein RUP1 (671 aa).

Residues 1 to 41 (MMDNQAVKSLLEMGIPHEVAVDALQRTGGNLEAAVNFIFSN) form the UBA domain. At Ser56 the chain carries Phosphoserine. The disordered stretch occupies residues 68–87 (GTKPCDVPNNGDQDIDMPDV). The stretch at 432 to 501 (SKRKQARTRS…LNSARAAKME (70 aa)) forms a coiled coil. Residues 643–671 (DGMGDPEQATNNINNGNDNDNDDDIDSDN) form a disordered region. Positions 661 to 671 (NDNDDDIDSDN) are enriched in acidic residues.

In terms of assembly, forms a ternary complex with RSP5 and UBP2.

The protein resides in the cytoplasm. It is found in the nucleus. Functionally, modulates the activity of the RSP5 HECT ubiquitin-protein ligase through its mediation of the interaction between RSP5 and the deubiquitinase UBP2. Involved in regulation of cell wall homeostasis. This is UBA domain-containing protein RUP1 (RUP1) from Saccharomyces cerevisiae (strain ATCC 204508 / S288c) (Baker's yeast).